We begin with the raw amino-acid sequence, 251 residues long: Chloride intracellular channel protein 5 (251 aa).

The interval 1–98 is required for insertion into the membrane; that stretch reads MTDSATTNGD…EEFLEETLTP (98 aa). A G-site motif is present at residues 32–35; sequence CPFS. The chain crosses the membrane as a helical span at residues 34–54; that stretch reads FSQRLFMILWLKGVVFNVTTV. A GST C-terminal domain is found at 101–241; sequence YPKLAAKHRE…AADSEIELAY (141 aa).

It belongs to the chloride channel CLIC family. As to quaternary structure, component of a multimeric complex consisting of several cytoskeletal proteins, including actin, ezrin, alpha-actinin, gelsolin, and IQGAP1. Interacts with AKAP9. Interacts with TPRN. TPRN, CLIC5 and PTPQR form concentric rings at the base of stereocilia and may form a complex. Interacts with EZR, MYO6 and RDX; the proteins may work together as a complex to stabilize linkages between the plasma membrane and subjacent actin cytoskeleton at the stereocilium base. In terms of tissue distribution, detected in lung and inner ear. Detected in embryonic cochlea, on microvilli-covered apical surfaces of interdental cells, columnar cells of Kolliker's organ, and on stereocilia of inner and outer hair cells (at protein level). Also detected in the eye, where it localizes to lens fiber cells in the lens epithelium (at protein level).

Its subcellular location is the golgi apparatus. The protein localises to the cytoplasm. It is found in the cytoskeleton. It localises to the microtubule organizing center. The protein resides in the centrosome. Its subcellular location is the cell cortex. The protein localises to the membrane. It is found in the apical cell membrane. It localises to the mitochondrion. The protein resides in the cell projection. Its subcellular location is the stereocilium. The enzyme catalyses Na(+)(in) = Na(+)(out). It catalyses the reaction K(+)(in) = K(+)(out). It carries out the reaction chloride(in) = chloride(out). With respect to regulation, inhibited by F-actin. Its function is as follows. In the soluble state, catalyzes glutaredoxin-like thiol disulfide exchange reactions with reduced glutathione as electron donor. Can insert into membranes and form non-selective ion channels almost equally permeable to Na(+), K(+) and Cl(-). Required for normal hearing. Necessary for the formation of stereocilia in the inner ear and normal development of the organ of Corti. Required for the proper localization of PTPRQ and RDX to the stereocilium base during postnatal maturation of hair bundles. Can insert into membranes and form poorly selective ion channels that may also transport chloride ions. Required for the development and/or maintenance of the proper glomerular endothelial cell and podocyte architecture. Plays a role in formation of the lens suture in the eye, which is important for normal optical properties of the lens. The protein is Chloride intracellular channel protein 5 (Clic5) of Mus musculus (Mouse).